Here is a 553-residue protein sequence, read N- to C-terminus: Methionine--tRNA ligase (553 aa).

The 'HIGH' region signature appears at 12 to 22 (PYANSQLHLGH). Residues Cys-144, Cys-147, Cys-157, and Cys-160 each coordinate Zn(2+). Residues 332–336 (KFSKS) carry the 'KMSKS' region motif. Lys-335 is a binding site for ATP.

It belongs to the class-I aminoacyl-tRNA synthetase family. MetG type 1 subfamily. In terms of assembly, monomer. The cofactor is Zn(2+).

It is found in the cytoplasm. The catalysed reaction is tRNA(Met) + L-methionine + ATP = L-methionyl-tRNA(Met) + AMP + diphosphate. Is required not only for elongation of protein synthesis but also for the initiation of all mRNA translation through initiator tRNA(fMet) aminoacylation. This chain is Methionine--tRNA ligase, found in Dehalococcoides mccartyi (strain ATCC BAA-2100 / JCM 16839 / KCTC 5957 / BAV1).